Consider the following 109-residue polypeptide: Probable cytochrome b-c1 complex subunit 7 (109 aa).

It belongs to the UQCRB/QCR7 family. In terms of assembly, component of the ubiquinol-cytochrome c oxidoreductase (cytochrome b-c1 complex, complex III, CIII), a multisubunit enzyme composed of 3 respiratory subunits cytochrome b, cytochrome c1 and Rieske protein, 2 core protein subunits, and additional low-molecular weight protein subunits. The complex exists as an obligatory dimer and forms supercomplexes (SCs) in the inner mitochondrial membrane with cytochrome c oxidase (complex IV, CIV).

Its subcellular location is the mitochondrion inner membrane. In terms of biological role, component of the ubiquinol-cytochrome c oxidoreductase, a multisubunit transmembrane complex that is part of the mitochondrial electron transport chain which drives oxidative phosphorylation. The respiratory chain contains 3 multisubunit complexes succinate dehydrogenase (complex II, CII), ubiquinol-cytochrome c oxidoreductase (cytochrome b-c1 complex, complex III, CIII) and cytochrome c oxidase (complex IV, CIV), that cooperate to transfer electrons derived from NADH and succinate to molecular oxygen, creating an electrochemical gradient over the inner membrane that drives transmembrane transport and the ATP synthase. The cytochrome b-c1 complex catalyzes electron transfer from ubiquinol to cytochrome c, linking this redox reaction to translocation of protons across the mitochondrial inner membrane, with protons being carried across the membrane as hydrogens on the quinol. In the process called Q cycle, 2 protons are consumed from the matrix, 4 protons are released into the intermembrane space and 2 electrons are passed to cytochrome c. This chain is Probable cytochrome b-c1 complex subunit 7, found in Dictyostelium discoideum (Social amoeba).